Reading from the N-terminus, the 371-residue chain is uncharacterized protein (371 aa).

The region spanning 110 to 140 is the 4Fe-4S ferredoxin-type domain; sequence MEKFIDFDRCNKCGECARKICKAKWTPLNYL.

This is an uncharacterized protein from Methanocaldococcus jannaschii (strain ATCC 43067 / DSM 2661 / JAL-1 / JCM 10045 / NBRC 100440) (Methanococcus jannaschii).